Consider the following 573-residue polypeptide: Methionine--tRNA ligase (573 aa).

The 'HIGH' region signature appears at 10 to 20; it reads PYVNSVPHLGN. Residues Cys143, Cys146, Cys156, and Cys159 each contribute to the Zn(2+) site. The 'KMSKS' region motif lies at 333–337; it reads KFSKS. Lys336 serves as a coordination point for ATP.

It belongs to the class-I aminoacyl-tRNA synthetase family. MetG type 1 subfamily. Zn(2+) serves as cofactor.

It is found in the cytoplasm. The catalysed reaction is tRNA(Met) + L-methionine + ATP = L-methionyl-tRNA(Met) + AMP + diphosphate. Functionally, is required not only for elongation of protein synthesis but also for the initiation of all mRNA translation through initiator tRNA(fMet) aminoacylation. The polypeptide is Methionine--tRNA ligase (Saccharolobus islandicus (strain M.14.25 / Kamchatka #1) (Sulfolobus islandicus)).